The following is a 357-amino-acid chain: Protein RecA (357 aa).

Position 73-80 (73-80 (GPESSGKT)) interacts with ATP.

Belongs to the RecA family.

Its subcellular location is the cytoplasm. Its function is as follows. Can catalyze the hydrolysis of ATP in the presence of single-stranded DNA, the ATP-dependent uptake of single-stranded DNA by duplex DNA, and the ATP-dependent hybridization of homologous single-stranded DNAs. It interacts with LexA causing its activation and leading to its autocatalytic cleavage. This is Protein RecA from Nitratidesulfovibrio vulgaris (strain DSM 19637 / Miyazaki F) (Desulfovibrio vulgaris).